Consider the following 126-residue polypeptide: Larval cuticle protein 2 (126 aa).

The signal sequence occupies residues 1–16 (MFKFVMVFAVLGLAAA). Positions 39–100 (ADGFDTDLVV…PVGAVLPTPP (62 aa)) constitute a Chitin-binding type R&amp;R domain.

Component of the larval cuticle. The polypeptide is Larval cuticle protein 2 (Lcp2) (Drosophila miranda (Fruit fly)).